Here is a 557-residue protein sequence, read N- to C-terminus: 2-succinyl-5-enolpyruvyl-6-hydroxy-3-cyclohexene-1-carboxylate synthase (557 aa).

This sequence belongs to the TPP enzyme family. MenD subfamily. Homodimer. It depends on Mg(2+) as a cofactor. Mn(2+) is required as a cofactor. The cofactor is thiamine diphosphate.

The catalysed reaction is isochorismate + 2-oxoglutarate + H(+) = 5-enolpyruvoyl-6-hydroxy-2-succinyl-cyclohex-3-ene-1-carboxylate + CO2. The protein operates within quinol/quinone metabolism; 1,4-dihydroxy-2-naphthoate biosynthesis; 1,4-dihydroxy-2-naphthoate from chorismate: step 2/7. It participates in quinol/quinone metabolism; menaquinone biosynthesis. Catalyzes the thiamine diphosphate-dependent decarboxylation of 2-oxoglutarate and the subsequent addition of the resulting succinic semialdehyde-thiamine pyrophosphate anion to isochorismate to yield 2-succinyl-5-enolpyruvyl-6-hydroxy-3-cyclohexene-1-carboxylate (SEPHCHC). The sequence is that of 2-succinyl-5-enolpyruvyl-6-hydroxy-3-cyclohexene-1-carboxylate synthase from Serratia proteamaculans (strain 568).